The sequence spans 134 residues: Small ribosomal subunit protein uS11 (134 aa).

This sequence belongs to the universal ribosomal protein uS11 family. Part of the 30S ribosomal subunit. Interacts with proteins S7 and S18. Binds to IF-3.

Its function is as follows. Located on the platform of the 30S subunit, it bridges several disparate RNA helices of the 16S rRNA. Forms part of the Shine-Dalgarno cleft in the 70S ribosome. This chain is Small ribosomal subunit protein uS11, found in Acidovorax ebreus (strain TPSY) (Diaphorobacter sp. (strain TPSY)).